A 393-amino-acid polypeptide reads, in one-letter code: Nuclear speckle splicing regulatory protein 1 homolog (393 aa).

The segment at 1-49 (MSAPPKRFGLIVKQKEEPKRAPVRVSSVFGDDDDDEAPATATNTSSASV) is disordered. Residues 39–48 (ATATNTSSAS) are compositionally biased toward low complexity. The stretch at 76–166 (NYDEIQAIKN…YREQEAEEAA (91 aa)) forms a coiled coil. Residues 187-350 (LLNDLARDPT…SLKDKLKPKR (164 aa)) form a disordered region. Residues 199–209 (KQRKMEKKNVR) show a composition bias toward basic residues. Basic and acidic residues-rich tracts occupy residues 222–236 (EDVK…KSIY), 243–261 (DEKK…EGEL), 317–333 (DHAQ…KSPE), and 341–350 (SLKDKLKPKR).

It belongs to the NSRP1 family.

This chain is Nuclear speckle splicing regulatory protein 1 homolog, found in Caenorhabditis briggsae.